The sequence spans 331 residues: Putative ankyrin repeat protein FPV012 (331 aa).

ANK repeat units lie at residues 11 to 40 (DGYTSLYKETAKGNIKKVVELLYKGVNPNT), 44 to 73 (DSYTPLHIAAKTGNIKIIRRLIRYGANVDK), 77 to 106 (DGYTALLIAICTGDIKTCNVLLDEGANPNY), and 110 to 139 (YGITPLVRIISYYRPTILKLLMDRGANCNQ).

The polypeptide is Putative ankyrin repeat protein FPV012 (Vertebrata (FPV)).